We begin with the raw amino-acid sequence, 887 residues long: MATAAPSPSSPLRPEDLLSDSSEPPGLNQVSSEVTSQLYTSLHLSRQAEATARAQLYLAPTSSPPNEGLDSLAQELSRSLSVGLENNLKKKDGSKHIFEMESVRGQLQTMLHTSRDTAYRTGSERREEDSFDSDSTATLLNTRPLQDLSPSSSAPALEELFPRYTSLRPGPPTNPPDFQGLRDALDAELTRRKHCERHIQSLQTRVLELQQQLAVAVAADHKKDLMIEQLDKTLARVVEGWNRHEAERTEVLRGLQEERQAAELTRSKQQETVTRLEQSLSEAMEALSREQEGARLQQREKEALEEERQALTLRLEVEQQQCRTLQEERDEARAGQLSEHRKLEALQVALQEERQAWIKQEHQLKERLQALQEEGQAQLEREKGNSQREAQAAWETQQQFALLQTEVRRLEGDLDTVRRERDALQLEMSLVQARYESQRIQMESELAVQLEQRVTERLAEAQENSLRQAASLRDHHRKQLQELSGQHQQELAAQLAQFKVEMADREERQQQVAQDYELRLAREQARVRDLKSGNQQLEEQRAELVERLQAMLQAHWEEANQLLSTTLLPPNPQAPLAEPSSPGPLEPEKGERRTWAMPPMAVALKPVLQQSREVKGDVPGAPSVLCSTSPDLSLLLGPPFQNQNSFQPLEPKPDVTPPTAGPFSALEAFTDDHRAERPFPEEDPGSDGDARLPPASQLEGLKNFLQQLLETAPQSNGNPSADLLLPKAGSRAVSSWEEAPQVPRLPPPVHKTKVPLAMASSLFRVHGLPSTNLQGSGLSTGSPEKDGLNLVDVSELLRLYQARGWGALPAEDLLLYLKRLEHSGTDGQGELVPRRNTDSRLGETTRKEIPSQAVPRRLASVPKTEKPARKKSGHPGPSMRSRGGIWR.

The tract at residues 1–34 (MATAAPSPSSPLRPEDLLSDSSEPPGLNQVSSEV) is disordered. Residue S81 is modified to Phosphoserine. 4 disordered regions span residues 110–153 (MLHT…PSSS), 465–486 (SLRQ…LSGQ), 566–591 (TLLP…EKGE), and 636–695 (LGPP…LPPA). A compositionally biased stretch (basic and acidic residues) spans 113 to 128 (TSRDTAYRTGSERREE). A compositionally biased stretch (polar residues) spans 133 to 153 (SDSTATLLNTRPLQDLSPSSS). Positions 191-557 (RRKHCERHIQ…LQAMLQAHWE (367 aa)) form a coiled coil. Residues 360–887 (QEHQLKERLQ…SMRSRGGIWR (528 aa)) form a required for centrosome localization region. The span at 670 to 680 (TDDHRAERPFP) shows a compositional bias: basic and acidic residues. S782 is subject to Phosphoserine. Residues 824 to 887 (GTDGQGELVP…SMRSRGGIWR (64 aa)) form a disordered region. The segment covering 832–849 (VPRRNTDSRLGETTRKEI) has biased composition (basic and acidic residues).

As to quaternary structure, interacts with LYST.

The protein localises to the cytoplasm. It localises to the cytoskeleton. Its subcellular location is the microtubule organizing center. The protein resides in the centrosome. It is found in the centriole. In terms of biological role, required for centriole duplication. Inhibition of centriole duplication leading to defects in cytokinesis. The sequence is that of Centrobin (Cntrob) from Mus musculus (Mouse).